A 347-amino-acid chain; its full sequence is Mitochondrial glycine transporter (347 aa).

Solcar repeat units lie at residues 18–102 (SKPT…LRTA), 138–222 (LSHT…SKRS), and 247–331 (STAS…LIMW). The next 6 helical transmembrane spans lie at 24–49 (FAAGLLSGLTSSILLQPADLLKTRVQ), 77–103 (GTLPSALRTGFGSALYFTSLNTLRTAV), 144–169 (LITGAVARVAAGFVMMPVTVLKVRYE), 197–220 (GFGATAIRDAPYAGLYVVFYEQSK), 251–277 (INFISGALAAGLATTITNPFDVVKTRV), and 306–324 (GLGLRMGRKALSSALAWTV).

This sequence belongs to the mitochondrial carrier (TC 2.A.29) family. SLC25A38 subfamily.

It is found in the mitochondrion inner membrane. The catalysed reaction is glycine(in) = glycine(out). Its function is as follows. Mitochondrial glycine transporter that imports glycine into the mitochondrial matrix. Plays an important role in providing glycine for the first enzymatic step in heme biosynthesis, the condensation of glycine with succinyl-CoA to produce 5-aminolevulinate (ALA) in the mitochondrial matrix. This is Mitochondrial glycine transporter from Coccidioides immitis (strain RS) (Valley fever fungus).